The following is a 297-amino-acid chain: Nucleotide-binding protein CJA_2809 (297 aa).

ATP is bound at residue 8 to 15; the sequence is GLSGSGKT. 59-62 provides a ligand contact to GTP; the sequence is DVRN.

It belongs to the RapZ-like family.

Its function is as follows. Displays ATPase and GTPase activities. The sequence is that of Nucleotide-binding protein CJA_2809 from Cellvibrio japonicus (strain Ueda107) (Pseudomonas fluorescens subsp. cellulosa).